We begin with the raw amino-acid sequence, 379 residues long: UDP-4-amino-4-deoxy-L-arabinose--oxoglutarate aminotransferase (379 aa).

An N6-(pyridoxal phosphate)lysine modification is found at K182.

The protein belongs to the DegT/DnrJ/EryC1 family. ArnB subfamily. In terms of assembly, homodimer. The cofactor is pyridoxal 5'-phosphate.

The enzyme catalyses UDP-4-amino-4-deoxy-beta-L-arabinose + 2-oxoglutarate = UDP-beta-L-threo-pentopyranos-4-ulose + L-glutamate. It functions in the pathway nucleotide-sugar biosynthesis; UDP-4-deoxy-4-formamido-beta-L-arabinose biosynthesis; UDP-4-deoxy-4-formamido-beta-L-arabinose from UDP-alpha-D-glucuronate: step 2/3. The protein operates within bacterial outer membrane biogenesis; lipopolysaccharide biosynthesis. Functionally, catalyzes the conversion of UDP-4-keto-arabinose (UDP-Ara4O) to UDP-4-amino-4-deoxy-L-arabinose (UDP-L-Ara4N). The modified arabinose is attached to lipid A and is required for resistance to polymyxin and cationic antimicrobial peptides. This is UDP-4-amino-4-deoxy-L-arabinose--oxoglutarate aminotransferase from Escherichia coli O8 (strain IAI1).